The chain runs to 841 residues: MRGSNLFQLTLALLLSLVAAEDGYNGWLRYAPVSCDLHCRQALPSHIVLLNSTKGSPIETAGRELKAGFQSILSTNLTFHPFQCDSSASILVATLDEYRQKCRDINLPELDPDGFWLQSEGDTVRILGNNARGALYGAYEYLAMVAQRNFSRVAYTTNPHAPIRWVNQWDNMDGSIERGYGGASIFFKDGTVVEDMAPVEQYARLLASIRINAIVVNNVNANATLLLPENMKGLGRIADACRPYGVQIGISLNFASPESLGGLETYDPLDPGVIAWWQNITDSLYTYVPDMAGYLVKADSEGQPGPDTYNRTLSQGANLFARALQPHGGVLMYRAFVYNDNLNESDWKADRAKAAVEYFKDLDGQFYENVVVQIKYGPIDFQVREPTSPLFANLYQTNTAIELEVSQEYLGQQCHLVYLPPLWKTVLDFDLRVDHKPSMVRDILSGQRFNRTLGGWAAVVNVGTNRTWLGSHLAMSNLYAYGRLAWSPTDDSEQILKDWTRLTFGQNRQVIDTIADMPMTSWPAYENYTGNLGIQTLTDILYTHYGPNPATQDNNGWGQWTRADHNSVGMDRTISNGTGYTGQYPEEVARLYESLETTPDDLVLWFHHVPWTHRLHSGLTVIQHFYNAHYAGSEAAHGFIRQWESLKGLIDRERYEAMRSRLVYQAGHSIVWRDAINNFYYNMTGIPDVAGRVGHHPWRIEAESMRLDGYQTYTVSPFEAASNTTAIITTSNSTTGTARTTIKAPSGVYDIGVNYYDLYGGQSKWTLSVGDKVVGQWLGDMEHQSLGHTPSIYLDGHSATRITFHGVVVRQGDQLKIVGEANGVEPAPVDYVVLLPPGVVD.

A signal peptide spans Met1–Ala20. Residues Asn51, Asn76, Asn149, Asn222, Asn279, Asn310, Asn343, Asn450, Asn465, Asn527, Asn576, Asn682, Asn723, and Asn732 are each glycosylated (N-linked (GlcNAc...) asparagine).

Belongs to the glycosyl hydrolase 67 family.

It localises to the secreted. It carries out the reaction an alpha-D-glucuronoside + H2O = D-glucuronate + an alcohol. Alpha-glucuronidase involved in the hydrolysis of xylan, a major structural heterogeneous polysaccharide found in plant biomass representing the second most abundant polysaccharide in the biosphere, after cellulose. Releases 4-O-methylglucuronic acid from xylan. The chain is Alpha-glucuronidase A (aguA) from Aspergillus tubingensis.